A 232-amino-acid polypeptide reads, in one-letter code: Ashwin (232 aa).

Basic and acidic residues-rich tracts occupy residues 64–97 (DLPK…DGLR) and 116–127 (KKTENGDNDRLR). The interval 64–232 (DLPKSRWGKM…KRKIQHVTWP (169 aa)) is disordered. The segment covering 130-140 (PQASATSNTFR) has biased composition (polar residues). Ser-143 is modified (phosphoserine). Low complexity predominate over residues 144-156 (DSSSSVSPLVLSS). A compositionally biased stretch (basic and acidic residues) spans 163 to 179 (KMEHGNNDNKQNHDLTH). Phosphoserine is present on residues Ser-182, Ser-189, and Ser-193. At Thr-198 the chain carries Phosphothreonine.

The protein belongs to the ashwin family. As to quaternary structure, component of the tRNA-splicing ligase complex.

It localises to the nucleus. In Bos taurus (Bovine), this protein is Ashwin.